Reading from the N-terminus, the 469-residue chain is UDP-N-acetylmuramate--L-alanine ligase (469 aa).

119 to 125 (GTHGKTT) provides a ligand contact to ATP.

Belongs to the MurCDEF family.

Its subcellular location is the cytoplasm. The catalysed reaction is UDP-N-acetyl-alpha-D-muramate + L-alanine + ATP = UDP-N-acetyl-alpha-D-muramoyl-L-alanine + ADP + phosphate + H(+). Its pathway is cell wall biogenesis; peptidoglycan biosynthesis. Functionally, cell wall formation. This chain is UDP-N-acetylmuramate--L-alanine ligase, found in Ruthia magnifica subsp. Calyptogena magnifica.